The following is a 582-amino-acid chain: MKPSDDKAQLSGLAQSEESSLDVDHQSFPCSPSIQPVASGCTHTENSAAYFLWPTSNLQHCAAEGRANYFGNLQKGLLPRHPGRLPKGQQANSLLDLMTIRAFHSKILRRFSLGTAVGFRIRKGDLTDIPAILVFVARKVHKKWLNPAQCLPAILEGPGGVWCDVDVVEFSYYGAPAQTPKEQMFSELVDKLCGSDECIGSGSQVASHETFGTLGAIVKRRTGNKQVGFLTNHHVAVDLDYPNQKMFHPLPPNLGPGVYLGAVERATSFITDDVWYGIYAGTNPETFVRADGAFIPFADDFDISTVTTVVRGVGDIGDVKVIDLQCPLNSLIGRQVCKVGRSSGHTTGTVMAYALEYNDEKGICFFTDILVVGENRQTFDLEGDSGSLIILTSQDGEKPRPIGIIWGGTANRGRLKLTSDHGPENWTSGVDLGRLLDRLELDIIITNESLQDAVQQQRFALVAAVTSAVGESSGVPVAIPEEKIEEIFEPLGIQIQQLPRHDVAASGTEGEEASNTVVNVEEHQFISNFVGMSPVRDDQDAPRSITNLNNPSEEELAMSLHLGDREPKRLRSDSGSSLDLEK.

2 disordered regions span residues Met-1–Gln-26 and Gly-531–Lys-582. A compositionally biased stretch (basic and acidic residues) spans Leu-562–Ser-572. Positions Pro-567–Asp-573 match the Nuclear localization signal motif. Residues Asp-573–Lys-582 are compositionally biased toward low complexity.

Expressed in leaf sheaths, leaf blades, culms and panicles. Preferentially expressed in vascular tissues in leaves and culms.

Its subcellular location is the nucleus. The protein resides in the nucleoplasm. The protein localises to the cytoplasm. Functionally, involved in the regulation of lateral leaf growth. May be involved in the regulation of basipetal polar auxin transport (PAT) and vascular patterning in leaves. Controls photosynthesis rate by regulating carboxylation efficiency and consequently photosynthesis rate. Controls panicle and spikelet numbers, and grain yield. The sequence is that of Protein NARROW LEAF 1 from Oryza sativa subsp. japonica (Rice).